Consider the following 111-residue polypeptide: Nucleoid-associated protein Cphamn1_1179 (111 aa).

The protein belongs to the YbaB/EbfC family. In terms of assembly, homodimer.

The protein localises to the cytoplasm. The protein resides in the nucleoid. In terms of biological role, binds to DNA and alters its conformation. May be involved in regulation of gene expression, nucleoid organization and DNA protection. This chain is Nucleoid-associated protein Cphamn1_1179, found in Chlorobium phaeobacteroides (strain BS1).